The sequence spans 635 residues: Threonine--tRNA ligase (635 aa).

The TGS domain occupies 1–58 (MIQVTCDQKNYEVLEGTTAAELAKQLKNSHQFIGVLINERPRDLSTHLNEGDTLVFLT). The segment at 237–528 (DHRVLGAKLD…LIENFKGRFP (292 aa)) is catalytic. 3 residues coordinate Zn(2+): Cys-328, His-379, and His-505.

The protein belongs to the class-II aminoacyl-tRNA synthetase family. In terms of assembly, homodimer. Zn(2+) serves as cofactor.

The protein localises to the cytoplasm. It catalyses the reaction tRNA(Thr) + L-threonine + ATP = L-threonyl-tRNA(Thr) + AMP + diphosphate + H(+). In terms of biological role, catalyzes the attachment of threonine to tRNA(Thr) in a two-step reaction: L-threonine is first activated by ATP to form Thr-AMP and then transferred to the acceptor end of tRNA(Thr). Also edits incorrectly charged L-seryl-tRNA(Thr). This is Threonine--tRNA ligase from Chlamydia pneumoniae (Chlamydophila pneumoniae).